The primary structure comprises 132 residues: Small ribosomal subunit protein uS8 (132 aa).

Belongs to the universal ribosomal protein uS8 family. As to quaternary structure, part of the 30S ribosomal subunit. Contacts proteins S5 and S12.

Functionally, one of the primary rRNA binding proteins, it binds directly to 16S rRNA central domain where it helps coordinate assembly of the platform of the 30S subunit. The protein is Small ribosomal subunit protein uS8 of Leifsonia xyli subsp. xyli (strain CTCB07).